The sequence spans 122 residues: Phospholipase A2 homolog ECS_00014 (122 aa).

7 disulfide bridges follow: Cys-26-Cys-115, Cys-28-Cys-44, Cys-43-Cys-95, Cys-49-Cys-122, Cys-50-Cys-88, Cys-57-Cys-81, and Cys-75-Cys-86. An important for membrane-damaging activities in eukaryotes and bacteria; heparin-binding region spans residues 105-117 (KKYTYYPNFWCKG).

This sequence belongs to the phospholipase A2 family. Group II subfamily. S49 sub-subfamily. In terms of assembly, monomer. Expressed by the venom gland.

The protein localises to the secreted. In terms of biological role, snake venom phospholipase A2 homolog that lacks enzymatic activity. Shows high myotoxin activities and displays edema-inducing activities. Has cytotoxic activities against HUVEC cells (LC(50)=12.2 uL) and human lung adenocarcinoma A549 cells (LC(50)=8.5 uL). In Echis carinatus sochureki (Saw-scaled viper), this protein is Phospholipase A2 homolog ECS_00014.